The primary structure comprises 193 residues: Holliday junction branch migration complex subunit RuvA (193 aa).

The interval 1–64 is domain I; sequence MIGRIAGTLL…EDAHLLYGFL (64 aa). Residues 65 to 139 form a domain II region; the sequence is TPQERSTFRE…GKLGADLGPL (75 aa). The segment at 139 to 143 is flexible linker; the sequence is LAGAA. The tract at residues 144-193 is domain III; sequence SPSDHAADILNALLALGYSEKEALAAIKNVPAGTGVSEGIKLSLKALSKA.

This sequence belongs to the RuvA family. Homotetramer. Forms an RuvA(8)-RuvB(12)-Holliday junction (HJ) complex. HJ DNA is sandwiched between 2 RuvA tetramers; dsDNA enters through RuvA and exits via RuvB. An RuvB hexamer assembles on each DNA strand where it exits the tetramer. Each RuvB hexamer is contacted by two RuvA subunits (via domain III) on 2 adjacent RuvB subunits; this complex drives branch migration. In the full resolvosome a probable DNA-RuvA(4)-RuvB(12)-RuvC(2) complex forms which resolves the HJ.

It localises to the cytoplasm. Its function is as follows. The RuvA-RuvB-RuvC complex processes Holliday junction (HJ) DNA during genetic recombination and DNA repair, while the RuvA-RuvB complex plays an important role in the rescue of blocked DNA replication forks via replication fork reversal (RFR). RuvA specifically binds to HJ cruciform DNA, conferring on it an open structure. The RuvB hexamer acts as an ATP-dependent pump, pulling dsDNA into and through the RuvAB complex. HJ branch migration allows RuvC to scan DNA until it finds its consensus sequence, where it cleaves and resolves the cruciform DNA. The polypeptide is Holliday junction branch migration complex subunit RuvA (Burkholderia thailandensis (strain ATCC 700388 / DSM 13276 / CCUG 48851 / CIP 106301 / E264)).